The sequence spans 334 residues: Photosystem II assembly protein Ycf48 (334 aa).

The N-terminal stretch at 1-22 (MAKMLKLWRLVLLAAFSLLLMA) is a signal peptide.

Belongs to the Ycf48 family. As to quaternary structure, part of early PSII assembly complexes which includes D1 (psbA) and PsbI; not found in mature PSII. Binds to the lumenal side of PSII complexes. Interacts with YidC.

It is found in the cellular thylakoid lumen. Its function is as follows. A factor required for optimal assembly of photosystem II (PSII), acting in the early stages of PSII assembly. Also plays a role in replacement of photodamaged D1 (psbA). Assists YidC in synthesis of chlorophyll-binding proteins. This chain is Photosystem II assembly protein Ycf48, found in Synechococcus sp. (strain JA-3-3Ab) (Cyanobacteria bacterium Yellowstone A-Prime).